We begin with the raw amino-acid sequence, 549 residues long: Ankyrin repeat domain-containing protein SOWAHA (549 aa).

The signal sequence occupies residues 1–17; that stretch reads MALAAAAAAAAAGVSQA. 2 disordered regions span residues 82 to 219 and 235 to 256; these read KPRP…PCML and EEPG…PLLL. Residues 203 to 216 are compositionally biased toward low complexity; it reads PGPGAAKGPPQQKP. Residues 235–248 are compositionally biased toward basic and acidic residues; that stretch reads EEPGLRRQLSEEPS. Ser-260 carries the phosphoserine modification. ANK repeat units follow at residues 345–374 and 384–414; these read SGFT…RSGA and GGYT…QVHV. The tract at residues 513–549 is disordered; sequence PRKKTKIRGGLPAFSEISRRPTPGPLAGLVPSLPPTT.

It belongs to the SOWAH family.

This is Ankyrin repeat domain-containing protein SOWAHA (SOWAHA) from Homo sapiens (Human).